The primary structure comprises 93 residues: UPF0250 protein PSPA7_1111 (93 aa).

Belongs to the UPF0250 family.

This chain is UPF0250 protein PSPA7_1111, found in Pseudomonas paraeruginosa (strain DSM 24068 / PA7) (Pseudomonas aeruginosa (strain PA7)).